A 433-amino-acid polypeptide reads, in one-letter code: Probable D-serine dehydratase (433 aa).

Lys110 bears the N6-(pyridoxal phosphate)lysine mark.

It belongs to the serine/threonine dehydratase family. DsdA subfamily. It depends on pyridoxal 5'-phosphate as a cofactor.

The catalysed reaction is D-serine = pyruvate + NH4(+). The sequence is that of Probable D-serine dehydratase from Oenococcus oeni (strain ATCC BAA-331 / PSU-1).